A 298-amino-acid polypeptide reads, in one-letter code: Ribosomal RNA small subunit methyltransferase H (298 aa).

Residues 35–37 (GGH), Asp55, Phe82, Asp100, and Gln107 contribute to the S-adenosyl-L-methionine site.

It belongs to the methyltransferase superfamily. RsmH family.

It localises to the cytoplasm. The enzyme catalyses cytidine(1402) in 16S rRNA + S-adenosyl-L-methionine = N(4)-methylcytidine(1402) in 16S rRNA + S-adenosyl-L-homocysteine + H(+). In terms of biological role, specifically methylates the N4 position of cytidine in position 1402 (C1402) of 16S rRNA. The polypeptide is Ribosomal RNA small subunit methyltransferase H (Chlamydia felis (strain Fe/C-56) (Chlamydophila felis)).